The sequence spans 368 residues: 3-dehydroquinate synthase (368 aa).

Residues 110-114 (GVIGD), 134-135 (TS), Lys-147, and Lys-156 each bind NAD(+). Residues Glu-189, His-254, and His-271 each contribute to the Zn(2+) site.

The protein belongs to the sugar phosphate cyclases superfamily. Dehydroquinate synthase family. NAD(+) is required as a cofactor. It depends on Co(2+) as a cofactor. Requires Zn(2+) as cofactor.

It is found in the cytoplasm. It catalyses the reaction 7-phospho-2-dehydro-3-deoxy-D-arabino-heptonate = 3-dehydroquinate + phosphate. It participates in metabolic intermediate biosynthesis; chorismate biosynthesis; chorismate from D-erythrose 4-phosphate and phosphoenolpyruvate: step 2/7. Its function is as follows. Catalyzes the conversion of 3-deoxy-D-arabino-heptulosonate 7-phosphate (DAHP) to dehydroquinate (DHQ). This is 3-dehydroquinate synthase from Thermosynechococcus vestitus (strain NIES-2133 / IAM M-273 / BP-1).